The chain runs to 256 residues: MGIQKPAWLDALYAEKFFVGCPYHETAKKNERNVCCLDCCTSLCPHCVPSHRFHRLLQVRRYVYHDVVRLEDLQKLIDCSNVQAYTINSAKVVFIKKRPQNRQFKGAGNYCTSCDRSLQEPYIHCSLGCKVDFVMKRYRDITPFLKPCHTLTLGPDYIIPQDLLTDDEVAAYETPRSTVVDGDESMSWSSASSDNNNAGAAAAYAATTTHVVRKKRTGFCLCAKSANSYKEVSEDPDDISACINRRKGVPQRSPLC.

The B box-type zinc-finger motif lies at 21-59 (CPYHETAKKNERNVCCLDCCTSLCPHCVPSHRFHRLLQV).

Expressed predominantly in root meristematic zones.

The protein resides in the nucleus. Functionally, probable transcription factor that plays a central role in mediating RGF1 hormone peptide signaling leading to the production of reactive oxygen species (ROS) in roots to modulate meristem size and root growth, probably via oxidative post-translational modification of the transcription factor PLETHORA (e.g. PLT1 and PLT2). The polypeptide is Protein RGF1 INDUCIBLE TRANSCRIPTION FACTOR 1 (Arabidopsis thaliana (Mouse-ear cress)).